Consider the following 271-residue polypeptide: Type III pantothenate kinase (271 aa).

An ATP-binding site is contributed by 6 to 13 (DVRNTHTV). 109–112 (GADR) lines the substrate pocket. Aspartate 111 serves as the catalytic Proton acceptor. Aspartate 131 contacts K(+). Serine 134 serves as a coordination point for ATP. Position 186 (threonine 186) interacts with substrate.

The protein belongs to the type III pantothenate kinase family. Homodimer. It depends on NH4(+) as a cofactor. Requires K(+) as cofactor.

The protein localises to the cytoplasm. The enzyme catalyses (R)-pantothenate + ATP = (R)-4'-phosphopantothenate + ADP + H(+). Its pathway is cofactor biosynthesis; coenzyme A biosynthesis; CoA from (R)-pantothenate: step 1/5. In terms of biological role, catalyzes the phosphorylation of pantothenate (Pan), the first step in CoA biosynthesis. In Mycobacterium avium (strain 104), this protein is Type III pantothenate kinase.